The primary structure comprises 358 residues: Ribosomal RNA-processing protein 8 (358 aa).

Positions 1-81 are disordered; that stretch reads MKPFEVPPWE…PQDSSDDDYE (81 aa). Residues 30 to 44 are compositionally biased toward basic residues; sequence AKKKPKKKKPKKKKA. A phosphoserine mark is found at S75 and S76. S-adenosyl-L-methionine is bound by residues H185, G220, D238, and C267.

It belongs to the methyltransferase superfamily. RRP8 family.

The protein resides in the nucleus. It localises to the nucleolus. Probable methyltransferase required to silence rDNA. In Drosophila melanogaster (Fruit fly), this protein is Ribosomal RNA-processing protein 8.